The following is a 362-amino-acid chain: Serine/threonine-protein kinase SRK2E (362 aa).

Phosphoserine; by autocatalysis occurs at positions 7, 18, 29, and 43. A Protein kinase domain is found at 21–277; it reads YELVKDIGSG…IPEIRNHEWF (257 aa). An ATP-binding site is contributed by 27–35; sequence IGSGNFGVA. Lysine 50 is an ATP binding site. Aspartate 140 acts as the Proton acceptor in catalysis. The interval 160 to 186 is activation loop; that stretch reads DFGYSKSSVLHSQPKSTVGTPAYIAPE. The residue at position 175 (serine 175) is a Phosphoserine. The domain I; osmotic stress response, required for the kinase activity stretch occupies residues 283–318; the sequence is ADLMNDNTMTTQFDESDQPGQSIEEIMQIIAEATVP. The interval 319-362 is domain II; ABA response and ABI1 binding; sequence PAGTQNLNHYLTGSLDIDDDMEEDLESDLDDLDIDSSGEIVYAM.

The protein belongs to the protein kinase superfamily. Ser/Thr protein kinase family. As to quaternary structure, interacts with ABI1, PP2CA and SLAC1. Interacts with B'ALPHA, B'BETA, B'DELTA, PP2AA2, PP2AA3, PP2A1 and PP2A2. Associates with MAPKKK18 within the nucleus. Interacts with I-2, TOPP1 and TOPP2. Interacts with ABI2. Autophosphorylation on residues Ser-7, Ser-18, Ser-29, Ser-43, Ser-175 and/or Thr-176. Only the phosphorylation of Ser-175 is crucial for the kinase activity. The phosphorylation of Ser-43 may repress the ABA signaling pathway in absence of ABA. In terms of tissue distribution, expressed in seedlings, leaves, flowers, stems, and roots, but restricted to guard cells and vascular tissue.

It is found in the nucleus. It carries out the reaction L-seryl-[protein] + ATP = O-phospho-L-seryl-[protein] + ADP + H(+). The enzyme catalyses L-threonyl-[protein] + ATP = O-phospho-L-threonyl-[protein] + ADP + H(+). Its activity is regulated as follows. Kinase activity enhanced by ABA and low humidity. Repressed by PP2CA independently of its phosphatase activity. Probably inactivated by ABI1. Repressed by TOPP1. Negatively regulated by ABI2. Activator of the abscisic acid (ABA) signaling pathway that regulates numerous ABA responses, such as stomata closure in response to drought, darkness, high CO(2), plant pathogens, or decreases in atmospheric relative humidity (RH). Involved in the resistance to drought by avoiding water loss. Required for the stomata closure mediated by pathogen-associated molecular pattern (PAMPs) (e.g. flg22 and LPS) of pathogenic bacteria such as P.syringae pv. tomato (Pst) and E.coli O157:H7. As a plant defense process, stomata are closed transiently in order to limit invaders, but actively reopened by bacteria after a few hours; virulent strains (e.g. Pst DC3000) are more efficient than avirulent strains (e.g. Pst DC3000 AvrRpt2) in reopening stomata. Mediates the phosphorylation and activation of the S-type anion efflux channel SLAC1, and thus promotes stomata closure. Essential for stomatal closure in response to reactive oxygen species (ROS). Promotes MAPKKK18 activity upon abscisic acid (ABA) treatment. The sequence is that of Serine/threonine-protein kinase SRK2E from Arabidopsis thaliana (Mouse-ear cress).